The sequence spans 58 residues: Probable U-exon protein (58 aa).

The chain is Probable U-exon protein from Snake adenovirus serotype 1 (SnAdV-1).